Reading from the N-terminus, the 392-residue chain is MAETFLFTSESVNEGHPDKLCDQISDAVLDACLEQDPESKVACETCTKTNLVMVFGEITTKANVDYEKIVRDTCRNIGFISNDVGLDADNCKVLVNIEQQSPDIAQGVHGHLTKRPEEIGAGDQGHMFGYATDETPELMPLSHVLATKLGARLTEVRKNGTCSWLRPDGKTQVTVEYYNDKGAMVPVRVHTVLISTQHDETVTNDEIAADLKEHVIKPVIPEKYLDEKTIFHLNPSGRFVIGGPHGDAGLTGRKIIIDTYGGWGAHGGGAFSGKDPTKVDRSGAYIVRQAAKSIVASELARRCIVQVSYAIGVPEPLSVFVDTYGTGKIPDKEILKIVKENFDFRPGMISINLDLKRGGNSRFLKTAAYGHFGREDPDFTWEVVKPLKWEKA.

Residue E10 participates in Mg(2+) binding. ATP is bound at residue H16. K(+) is bound at residue E44. Positions 57 and 100 each coordinate L-methionine. ATP-binding positions include 168 to 170, 236 to 239, D247, 253 to 254, A270, K274, and K278; these read DGK, SGRF, and RK. Residue D247 coordinates L-methionine. K278 serves as a coordination point for L-methionine.

This sequence belongs to the AdoMet synthase family. In terms of assembly, homotetramer. Mn(2+) is required as a cofactor. It depends on Mg(2+) as a cofactor. Co(2+) serves as cofactor. The cofactor is K(+).

The protein resides in the cytoplasm. It carries out the reaction L-methionine + ATP + H2O = S-adenosyl-L-methionine + phosphate + diphosphate. The protein operates within amino-acid biosynthesis; S-adenosyl-L-methionine biosynthesis; S-adenosyl-L-methionine from L-methionine: step 1/1. Its function is as follows. Catalyzes the formation of S-adenosylmethionine from methionine and ATP. The reaction comprises two steps that are both catalyzed by the same enzyme: formation of S-adenosylmethionine (AdoMet) and triphosphate, and subsequent hydrolysis of the triphosphate. This is S-adenosylmethionine synthase (SAMS) from Phaseolus lunatus (Lima bean).